Reading from the N-terminus, the 568-residue chain is PCNA-interacting partner (568 aa).

Residues 442–555 are disordered; the sequence is QIPTCVHPAP…RNNKAVSKKL (114 aa). Residues 488 to 500 show a composition bias toward polar residues; the sequence is NAWNQTGGKSTQP. Over residues 515–527 the composition is skewed to basic and acidic residues; the sequence is ANRECTEQGREEN.

It belongs to the PARI family.

Its subcellular location is the cytoplasm. It localises to the nucleus. Its function is as follows. Required to suppress inappropriate homologous recombination, thereby playing a central role DNA repair and in the maintenance of genomic stability. This Danio rerio (Zebrafish) protein is PCNA-interacting partner (parpbp).